A 418-amino-acid chain; its full sequence is Serine--tRNA ligase (418 aa).

231–233 (TAE) serves as a coordination point for L-serine. 262–264 (RSE) provides a ligand contact to ATP. Position 285 (Glu285) interacts with L-serine. 349 to 352 (EISS) provides a ligand contact to ATP. Residue Ser385 participates in L-serine binding.

It belongs to the class-II aminoacyl-tRNA synthetase family. Type-1 seryl-tRNA synthetase subfamily. In terms of assembly, homodimer. The tRNA molecule binds across the dimer.

The protein localises to the cytoplasm. The catalysed reaction is tRNA(Ser) + L-serine + ATP = L-seryl-tRNA(Ser) + AMP + diphosphate + H(+). The enzyme catalyses tRNA(Sec) + L-serine + ATP = L-seryl-tRNA(Sec) + AMP + diphosphate + H(+). It functions in the pathway aminoacyl-tRNA biosynthesis; selenocysteinyl-tRNA(Sec) biosynthesis; L-seryl-tRNA(Sec) from L-serine and tRNA(Sec): step 1/1. Catalyzes the attachment of serine to tRNA(Ser). Is also able to aminoacylate tRNA(Sec) with serine, to form the misacylated tRNA L-seryl-tRNA(Sec), which will be further converted into selenocysteinyl-tRNA(Sec). This chain is Serine--tRNA ligase, found in Ureaplasma urealyticum serovar 10 (strain ATCC 33699 / Western).